Reading from the N-terminus, the 694-residue chain is Nuclear cap-binding protein subunit 3 (694 aa).

The disordered stretch occupies residues 1 to 47 (MAAVRSLRVSVKSDSASDRSESDSESDSDRDAREAEPMEVEEGEVEL). The span at 15–36 (SASDRSESDSESDSDRDAREAE) shows a compositional bias: basic and acidic residues. Residues 37 to 47 (PMEVEEGEVEL) show a composition bias toward acidic residues. The interval 126–187 (EALHMSGVDD…LSRMPDKEEV (62 aa)) is RNA recognition motif (RRM) domain. The WLDD motif; essential for 7-methylguanosine-containing mRNA cap binding signature appears at 155-158 (WIDD). Disordered regions lie at residues 183-277 (DKEE…VKPF), 336-430 (ILKT…MDYD), and 461-694 (LRNS…DSDS). The segment covering 189-203 (NTDSSKPSELPVQTQ) has biased composition (polar residues). A compositionally biased stretch (acidic residues) spans 212-235 (DDDDDDDEEEEGEVDDDDDDDEED). A compositionally biased stretch (basic and acidic residues) spans 236 to 264 (EKARDIEDETEKKPQETRETSLSQAERDS). Over residues 368–386 (EPIEEEEEEEEDGEEDMDA) the composition is skewed to acidic residues. The span at 387-404 (DDRVVEYKDRGEKERGPR) shows a compositional bias: basic and acidic residues. Residues 477-496 (IGGGGGGGSGGAVEGRGEGG) show a composition bias toward gly residues. Composition is skewed to basic and acidic residues over residues 501 to 517 (TSEK…EKRQ), 563 to 595 (SRRE…DKKT), and 605 to 618 (SHKD…DKPS). A compositionally biased stretch (acidic residues) spans 634-646 (DSDGVEDEDEEDD). The span at 685–694 (DGSNGSDSDS) shows a compositional bias: low complexity.

Belongs to the NCBP3 family. Component of an alternative cap-binding complex (CBC) composed of NCBP1/CBP80 and NCBP3.

The protein localises to the nucleus. It is found in the cytoplasm. Its function is as follows. Associates with NCBP1/CBP80 to form an alternative cap-binding complex (CBC) which plays a key role in mRNA export. NCBP3 serves as adapter protein linking the capped RNAs (m7GpppG-capped RNA) to NCBP1/CBP80. Unlike the conventional CBC with NCBP2 which binds both small nuclear RNA (snRNA) and messenger (mRNA) and is involved in their export from the nucleus, the alternative CBC with NCBP3 does not bind snRNA and associates only with mRNA thereby playing a role in only mRNA export. This is Nuclear cap-binding protein subunit 3 from Danio rerio (Zebrafish).